The sequence spans 501 residues: Zinc finger protein PLAG1 (501 aa).

The interval 1 to 30 (MATVIPGDLSEVRDTQKVPSGKRKRGETKP) is disordered. A Nuclear localization signal motif is present at residues 22–25 (KRKR). 7 consecutive C2H2-type zinc fingers follow at residues 34-56 (FPCQ…SYSH), 62-86 (YKCT…MATH), 92-114 (HKCN…LHTH), 121-143 (FKCE…LALH), 150-172 (LTCK…LKTH), 185-207 (HQCE…MVVH), and 213-236 (FLCQ…KKSH). Low complexity-rich tracts occupy residues 366 to 380 (SGMP…ASSS) and 455 to 467 (TQLP…PQDP). 2 disordered regions span residues 366–406 (SGMP…GSVP) and 447–474 (QEEA…IGLG).

It belongs to the krueppel C2H2-type zinc-finger protein family. As to expression, expressed in nephroblastoma.

The protein localises to the nucleus. Functionally, transcription factor and proto-oncogene whose activation results in up-regulation of target genes, such as IGFII, leading to uncontrolled cell proliferation. This Gallus gallus (Chicken) protein is Zinc finger protein PLAG1 (PLAG1).